Reading from the N-terminus, the 528-residue chain is Propionate catabolism operon regulatory protein (528 aa).

The Sigma-54 factor interaction domain occupies 218–461; it reads MLGQSPQMEQ…RNMMERLALF (244 aa). 318–327 serves as a coordination point for ATP; sequence AHGGTLFLDE. Positions 508–527 form a DNA-binding region, H-T-H motif; the sequence is KTAAANYLGISRTTFWRRLK.

Its function is as follows. Involved in the transcriptional regulation of the propionate catabolism operon. The chain is Propionate catabolism operon regulatory protein (prpR) from Escherichia coli (strain K12).